Consider the following 855-residue polypeptide: Spindle and centriole-associated protein 1 (855 aa).

Residues 164–200 (QALNDVDGEEEGTVTSQSGESENENELDNSLNSQSNT) form a disordered region. T235 is subject to Phosphothreonine. The span at 300–311 (KPNLHALSKPKK) shows a compositional bias: basic residues. Positions 300–328 (KPNLHALSKPKKNMLSGSTTSADLPNRTN) are disordered. The segment covering 314–328 (LSGSTTSADLPNRTN) has biased composition (polar residues). A coiled-coil region spans residues 325–437 (NRTNSNLDVL…TQARLRQYMV (113 aa)). Residues S640 and S644 each carry the phosphoserine modification. Positions 725 to 751 (GSMEERIAELNRQSMEARGKLLQLIEQ) form a coiled coil. Residues S760, S764, and S819 each carry the phosphoserine modification. The tract at residues 789–834 (EAPESSKCSTVSPVSEINTRRSSGATSNSCSPLNATSGSGRFTPLN) is disordered. Positions 794 to 828 (SKCSTVSPVSEINTRRSSGATSNSCSPLNATSGSG) are enriched in polar residues.

In terms of assembly, interacts with CEP120.

The protein localises to the cytoplasm. Its subcellular location is the cytoskeleton. It localises to the microtubule organizing center. The protein resides in the centrosome. It is found in the centriole. The protein localises to the spindle. In terms of biological role, regulator required for centriole duplication, for proper bipolar spindle formation and chromosome congression in mitosis. This is Spindle and centriole-associated protein 1 (SPICE1) from Pongo abelii (Sumatran orangutan).